A 258-amino-acid chain; its full sequence is Diacetyl reductase [(S)-acetoin forming] (258 aa).

Residue 8–32 (LVTGGAQGIGFKIAERLVEDGFKVA) coordinates NAD(+). Position 141 (S141) interacts with substrate. Y154 acts as the Proton acceptor in catalysis. K158 is an active-site residue.

The protein belongs to the short-chain dehydrogenases/reductases (SDR) family.

The enzyme catalyses (S)-acetoin + NAD(+) = diacetyl + NADH + H(+). Catalyzes the irreversible reduction of 2,3-butanediol to (S)-acetoin in the presence of NADH. This Staphylococcus aureus (strain Mu50 / ATCC 700699) protein is Diacetyl reductase [(S)-acetoin forming] (butA).